Here is a 597-residue protein sequence, read N- to C-terminus: Sodium/mannose cotransporter SLC5A10 (597 aa).

Over 1 to 16 (MAVDNSTSDAHTPGRQ) the chain is Extracellular. N-linked (GlcNAc...) asparagine glycosylation is present at Asn5. A helical membrane pass occupies residues 17 to 37 (LTVVDIAIIAVYFALNVAVGI). Residues 38 to 73 (WSSCRASRNTVRGYFLAGRDMTWWPIGASLFASSEG) are Cytoplasmic-facing. The chain crosses the membrane as a helical span at residues 74–94 (SGLFIGLAGSGAAGGLAVAGF). The Extracellular segment spans residues 95 to 100 (EWNATY). N-linked (GlcNAc...) asparagine glycosylation occurs at Asn97. A helical transmembrane segment spans residues 101–121 (VLLALAWVFVPIYLSSEIVTM). Over 122 to 139 (PEYMQKRYGGQRIRMYLS) the chain is Cytoplasmic. Residues 140–162 (VLSLLLSVFTKISIDLYAGALFV) form a helical membrane-spanning segment. At 163 to 174 (HICLGWNFYLST) the chain is on the extracellular side. A helical membrane pass occupies residues 175–195 (VIMLAITALYTIAGGLTAVIY). The Cytoplasmic portion of the chain corresponds to 196–201 (TDALQT). Residues 202 to 222 (LVMVAGAVILTIKAFEQIGGY) form a helical membrane-spanning segment. Residues 223 to 265 (EQLAEAYAQAVPSRTISNTTCHVPRADAMHMFRDPYTADLPWT) lie on the Extracellular side of the membrane. Residues 266–286 (GMTFGLTIMAAWYWCTDQVIV) traverse the membrane as a helical segment. At 287–301 (QRSLSARDLNHAKGG) the chain is on the cytoplasmic side. The helical transmembrane segment at 302–322 (SILASYLKMLPMGLMVMPGMI) threads the bilayer. Over 323–367 (SRVLFPDDVGCVVPAECLRACGAEIGCSNIAYPKLVMELMPTGLR) the chain is Extracellular. Residues 368 to 388 (GLMVAVMMAALMSSLTSIFNS) form a helical membrane-spanning segment. Residues 389–410 (SSTLFTMDIWRRLRPRAGEREL) lie on the Cytoplasmic side of the membrane. Residues 411-431 (LLVGRLVIVVLVGVSVAWIPV) form a helical membrane-spanning segment. The Extracellular portion of the chain corresponds to 432–444 (LQGSNGGQLFIYM). Residues 445 to 465 (QSVTSSLAPPVTAVFVLGIFW) traverse the membrane as a helical segment. Residues 466-472 (RRANEQG) lie on the Cytoplasmic side of the membrane. Residues 473 to 493 (AFWGLMAGLAVGATRLVLEFL) traverse the membrane as a helical segment. At 494–514 (HPAPPCGHPDTRPPILHGVHY) the chain is on the extracellular side. A helical transmembrane segment spans residues 515–535 (LHFAVALFLLSGAVVVAGSLL). Residues 536–576 (TPHPQGVQIQSLTWWTLAQDLPLGVKTGDGRASQRHAFWAR) are Cytoplasmic-facing. The helical transmembrane segment at 577–597 (VCGVNAILLMCVNIFFYTYFA) threads the bilayer.

Belongs to the sodium:solute symporter (SSF) (TC 2.A.21) family. As to expression, predominantyl expressed in kidney. Also detected at very low levels in testes, skeletal muscle, and spleen.

Its subcellular location is the apical cell membrane. The enzyme catalyses D-mannose(out) + Na(+)(out) = D-mannose(in) + Na(+)(in). It catalyses the reaction D-fructopyranose(out) + Na(+)(out) = D-fructopyranose(in) + Na(+)(in). In terms of biological role, electrogenic Na+-coupled sugar symporter that actively transports D-mannose or D-fructose at the plasma membrane, with a Na+ to sugar coupling ratio of 1:1. Transporter activity is driven by a transmembrane Na+ electrochemical gradient set by the Na+/K+ pump. Exclusively recognizes sugar substrates having a pyranose ring with an axial hydroxyl group on carbon 2. Has likely evolved to enable renal reabsorption of D-mannose, an important constituent of oligosaccharide chains of glycoproteins. Contributes to dietary D-fructose reabsorption from glomerular filtrate across the brush border of the kidney. The sequence is that of Sodium/mannose cotransporter SLC5A10 (SLC5A10) from Bos taurus (Bovine).